A 332-amino-acid polypeptide reads, in one-letter code: Ferrochelatase (332 aa).

Residues His201 and Glu283 each coordinate Fe cation.

Belongs to the ferrochelatase family.

It localises to the cytoplasm. It catalyses the reaction heme b + 2 H(+) = protoporphyrin IX + Fe(2+). Its pathway is porphyrin-containing compound metabolism; protoheme biosynthesis; protoheme from protoporphyrin-IX: step 1/1. Functionally, catalyzes the ferrous insertion into protoporphyrin IX. The protein is Ferrochelatase of Francisella tularensis subsp. holarctica (strain FTNF002-00 / FTA).